Here is a 566-residue protein sequence, read N- to C-terminus: Arginine--tRNA ligase (566 aa).

The 'HIGH' region motif lies at 121-131 (ANPNGPFHIGH).

Belongs to the class-I aminoacyl-tRNA synthetase family.

Its subcellular location is the cytoplasm. The catalysed reaction is tRNA(Arg) + L-arginine + ATP = L-arginyl-tRNA(Arg) + AMP + diphosphate. This is Arginine--tRNA ligase from Methanococcus maripaludis (strain C5 / ATCC BAA-1333).